A 286-amino-acid polypeptide reads, in one-letter code: Bifunctional protein FolD (286 aa).

Residues 166-168 (GAS) and Ile232 each bind NADP(+).

This sequence belongs to the tetrahydrofolate dehydrogenase/cyclohydrolase family. In terms of assembly, homodimer.

It catalyses the reaction (6R)-5,10-methylene-5,6,7,8-tetrahydrofolate + NADP(+) = (6R)-5,10-methenyltetrahydrofolate + NADPH. The catalysed reaction is (6R)-5,10-methenyltetrahydrofolate + H2O = (6R)-10-formyltetrahydrofolate + H(+). It participates in one-carbon metabolism; tetrahydrofolate interconversion. Its function is as follows. Catalyzes the oxidation of 5,10-methylenetetrahydrofolate to 5,10-methenyltetrahydrofolate and then the hydrolysis of 5,10-methenyltetrahydrofolate to 10-formyltetrahydrofolate. In Shewanella denitrificans (strain OS217 / ATCC BAA-1090 / DSM 15013), this protein is Bifunctional protein FolD.